The primary structure comprises 424 residues: MTVGAGGKTSADADPLMLVRAIADADRRAAHALNLVPSENRISPLASLPLASDFYNRYFFNTDGDPLFWEFRGGEDIAHIEALGAAALRRMASARYCNVRPISGMSAMILTVAALSPPGSTVVSVDQNSGGHYATPALLGRLGRRSRLLNCKDGEVDESELAEVLAPGDVALVYVDVQNCVRVPDFRRMSDVIREVSPGTRLYVDASHYLGLVLGGLLANPLDCGADAFGGSTHKSFPGPHKGVIFTNAEDVDESLRSAQFDLVSSHHFAETLALSLAALEVEDRMGDYARATNDNARRLAGALADAGFRVYGDSATGYTDTHQVWVELDGVAAAYALSNRLAEGGIRVNLQSSMPGMSGVHLRLGSNEVTFEGAGPQAIEELAGALVTARERALGPRTVHEIRGRFGAPFYTDPEKLKVEAGL.

Lys235 carries the N6-(pyridoxal phosphate)lysine modification.

The protein belongs to the SHMT family. Pyridoxal 5'-phosphate is required as a cofactor.

The catalysed reaction is uridine-5'-aldehyde + L-threonine = (5'S,6'S)-C-glycyluridine + acetaldehyde. It participates in antibiotic biosynthesis. Its function is as follows. Transaldolase involved in the biosynthesis of the lipopeptidyl nucleoside antibiotic A-90289. Catalyzes the condensation of L-threonine and uridine-5'-aldehyde to form 5'-C-glycyluridine (GlyU). Forms (5'S,6'S)-GlyU. Has no activity with alternative amino acids, such as glycine or serine. This chain is L-threonine:uridine-5'-aldehyde transaldolase, found in Streptomyces sp.